The sequence spans 264 residues: MGNSGFYLYNTQNCVFADNIKVGQMTEPLKDQQIILGTTSTPVAAKMTASDGISLTVSNNPSTNASITIGLDAEKAYQLILEKLGDQILGGIADTIVDSTVQDILDKITTDPSLGLLKAFNNFPITNKIQCNGLFTPRNIETLLGGTEIGKFTVTPKSSGSMFLVSADIIASRMEGGVVLALVREGDSKPYAISYGYSSGVPNLCSLRTRIINTGLTPTTYSLRVGGLESGVVWVNALSNGNDILGITNTSNVSFLEVIPQTNA.

In Chlamydia trachomatis serovar L2 (strain ATCC VR-902B / DSM 19102 / 434/Bu), this protein is Virulence plasmid protein pGP3-D.